Reading from the N-terminus, the 299-residue chain is ATP phosphoribosyltransferase (299 aa).

Belongs to the ATP phosphoribosyltransferase family. Long subfamily. In terms of assembly, equilibrium between an active dimeric form, an inactive hexameric form and higher aggregates. Interconversion between the various forms is largely reversible and is influenced by the natural substrates and inhibitors of the enzyme. It depends on Mg(2+) as a cofactor.

It localises to the cytoplasm. The catalysed reaction is 1-(5-phospho-beta-D-ribosyl)-ATP + diphosphate = 5-phospho-alpha-D-ribose 1-diphosphate + ATP. It functions in the pathway amino-acid biosynthesis; L-histidine biosynthesis; L-histidine from 5-phospho-alpha-D-ribose 1-diphosphate: step 1/9. Its activity is regulated as follows. Feedback inhibited by histidine. Functionally, catalyzes the condensation of ATP and 5-phosphoribose 1-diphosphate to form N'-(5'-phosphoribosyl)-ATP (PR-ATP). Has a crucial role in the pathway because the rate of histidine biosynthesis seems to be controlled primarily by regulation of HisG enzymatic activity. The protein is ATP phosphoribosyltransferase of Pectobacterium carotovorum subsp. carotovorum (strain PC1).